Here is a 260-residue protein sequence, read N- to C-terminus: Thiazole synthase (260 aa).

Lysine 96 (schiff-base intermediate with DXP) is an active-site residue. 1-deoxy-D-xylulose 5-phosphate is bound by residues glycine 157, 184-185, and 206-207; these read AG and NT.

This sequence belongs to the ThiG family. As to quaternary structure, homotetramer. Forms heterodimers with either ThiH or ThiS.

The protein resides in the cytoplasm. The enzyme catalyses [ThiS sulfur-carrier protein]-C-terminal-Gly-aminoethanethioate + 2-iminoacetate + 1-deoxy-D-xylulose 5-phosphate = [ThiS sulfur-carrier protein]-C-terminal Gly-Gly + 2-[(2R,5Z)-2-carboxy-4-methylthiazol-5(2H)-ylidene]ethyl phosphate + 2 H2O + H(+). Its pathway is cofactor biosynthesis; thiamine diphosphate biosynthesis. Functionally, catalyzes the rearrangement of 1-deoxy-D-xylulose 5-phosphate (DXP) to produce the thiazole phosphate moiety of thiamine. Sulfur is provided by the thiocarboxylate moiety of the carrier protein ThiS. In vitro, sulfur can be provided by H(2)S. This chain is Thiazole synthase, found in Bradyrhizobium sp. (strain BTAi1 / ATCC BAA-1182).